Consider the following 541-residue polypeptide: Chaperonin GroEL (541 aa).

ATP contacts are provided by residues 29-32 (TLGP), 86-90 (DGTTT), Gly-413, 477-479 (DAL), and Asp-493.

The protein belongs to the chaperonin (HSP60) family. In terms of assembly, forms a cylinder of 14 subunits composed of two heptameric rings stacked back-to-back. Interacts with the co-chaperonin GroES.

The protein resides in the cytoplasm. The catalysed reaction is ATP + H2O + a folded polypeptide = ADP + phosphate + an unfolded polypeptide.. Functionally, together with its co-chaperonin GroES, plays an essential role in assisting protein folding. The GroEL-GroES system forms a nano-cage that allows encapsulation of the non-native substrate proteins and provides a physical environment optimized to promote and accelerate protein folding. The chain is Chaperonin GroEL from Clostridium botulinum (strain ATCC 19397 / Type A).